Here is a 300-residue protein sequence, read N- to C-terminus: ATP-dependent (S)-NAD(P)H-hydrate dehydratase (300 aa).

Residues 14–293 form the YjeF C-terminal domain; that stretch reads LLTLFKTIVP…NEISAVFRSD (280 aa). Residues G114 and 167 to 173 each bind (6S)-NADPHX; that span reads NAMEFRR. ATP contacts are provided by residues 198–202 and 219–228; these read KGVND and GSGRRCGGQG. D229 contacts (6S)-NADPHX.

The protein belongs to the NnrD/CARKD family. Requires Mg(2+) as cofactor.

It catalyses the reaction (6S)-NADHX + ATP = ADP + phosphate + NADH + H(+). The enzyme catalyses (6S)-NADPHX + ATP = ADP + phosphate + NADPH + H(+). Its function is as follows. Catalyzes the dehydration of the S-form of NAD(P)HX at the expense of ATP, which is converted to ADP. Together with NAD(P)HX epimerase, which catalyzes the epimerization of the S- and R-forms, the enzyme allows the repair of both epimers of NAD(P)HX, a damaged form of NAD(P)H that is a result of enzymatic or heat-dependent hydration. This is ATP-dependent (S)-NAD(P)H-hydrate dehydratase from Drosophila pseudoobscura pseudoobscura (Fruit fly).